The chain runs to 164 residues: ATP synthase subunit b 2 (164 aa).

Residues 4 to 24 traverse the membrane as a helical segment; the sequence is TFWAFVGLVLFLALLVYFQIP.

Belongs to the ATPase B chain family. In terms of assembly, F-type ATPases have 2 components, F(1) - the catalytic core - and F(0) - the membrane proton channel. F(1) has five subunits: alpha(3), beta(3), gamma(1), delta(1), epsilon(1). F(0) has three main subunits: a(1), b(2) and c(10-14). The alpha and beta chains form an alternating ring which encloses part of the gamma chain. F(1) is attached to F(0) by a central stalk formed by the gamma and epsilon chains, while a peripheral stalk is formed by the delta and b chains.

The protein resides in the cell inner membrane. Its function is as follows. F(1)F(0) ATP synthase produces ATP from ADP in the presence of a proton or sodium gradient. F-type ATPases consist of two structural domains, F(1) containing the extramembraneous catalytic core and F(0) containing the membrane proton channel, linked together by a central stalk and a peripheral stalk. During catalysis, ATP synthesis in the catalytic domain of F(1) is coupled via a rotary mechanism of the central stalk subunits to proton translocation. In terms of biological role, component of the F(0) channel, it forms part of the peripheral stalk, linking F(1) to F(0). The chain is ATP synthase subunit b 2 from Bartonella tribocorum (strain CIP 105476 / IBS 506).